The following is a 236-amino-acid chain: MVKVLLALTSYNETFYSDGKKTGVFVVEALHPFEVFRKKGYEIQLASETGTFGWDDHSVVPDFLNGEDKEIFDNVNSEFNVALKNLKKASDLDPNDYDIFFGSAGHGTLFDYPNAKDLQKIATTVYDKGGVVSAVCHGPAIFENLNDPKTGEPLIKGKKITGFTDIGEDILGVTDIMKKGNLLTIKQVAEKEGATYIEPEGPWDNFTVTDGRIVTGVNPQSAVKTAEDVIAAFECN.

Catalysis depends on residues Cys136, His137, and Glu168. Position 136 is a cysteine sulfinic acid (-SO2H) (Cys136).

This sequence belongs to the peptidase C56 family. HSP31-like subfamily. Monomer.

It catalyses the reaction methylglyoxal + H2O = (R)-lactate + H(+). In terms of biological role, catalyzes the conversion of methylglyoxal (MG) to D-lactate in a single glutathione (GSH)-independent step. Selective for MG, does not use glyoxal as substrate. Plays a role in detoxifying endogenously produced MG, particularly when glycerol is the principal carbon source. Important for viability in stationary phase. The sequence is that of Glyoxalase 3 from Candida albicans (strain SC5314 / ATCC MYA-2876) (Yeast).